Reading from the N-terminus, the 347-residue chain is GTPase Obg (347 aa).

The Obg domain occupies Met1 to Leu159. The segment at Asn127–Pro146 is disordered. Over residues Arg129–Pro138 the composition is skewed to polar residues. Residues Ala160–Glu334 enclose the OBG-type G domain. GTP contacts are provided by residues Gly166–Ser173, Phe191–Tyr195, Asp213–Gly216, Asn284–Asp287, and Ser315–Ala317. Mg(2+)-binding residues include Ser173 and Thr193.

It belongs to the TRAFAC class OBG-HflX-like GTPase superfamily. OBG GTPase family. Monomer. Mg(2+) serves as cofactor.

Its subcellular location is the cytoplasm. An essential GTPase which binds GTP, GDP and possibly (p)ppGpp with moderate affinity, with high nucleotide exchange rates and a fairly low GTP hydrolysis rate. Plays a role in control of the cell cycle, stress response, ribosome biogenesis and in those bacteria that undergo differentiation, in morphogenesis control. This is GTPase Obg from Thioalkalivibrio sulfidiphilus (strain HL-EbGR7).